A 116-amino-acid polypeptide reads, in one-letter code: Vesicle-associated membrane protein 5 (116 aa).

The Cytoplasmic portion of the chain corresponds to 1-72 (MAGIELERCQ…CWENIRYRIC (72 aa)). Positions 5 to 65 (ELERCQQQAN…QNLAQKKCWE (61 aa)) constitute a v-SNARE coiled-coil homology domain. Residues serine 41, serine 48, and serine 49 each carry the phosphoserine modification. A helical; Anchor for type IV membrane protein membrane pass occupies residues 73–93 (VGLVVVGVLLIILIVLLVVFL). Residues 94–116 (PQSSDSSSAPRTQDAGIASGPGN) are Vesicular-facing. Residues 96–116 (SSDSSSAPRTQDAGIASGPGN) form a disordered region.

Belongs to the synaptobrevin family. Post-translationally, (Microbial infection) Targeted and hydrolyzed by C.botulinum neurotoxin type X (BoNT/X) which hydrolyzes the 40-Arg-|-Ser-41 bond and probably inhibits neurotransmitter release. It remains unknown whether BoNT/X is ever produced, or what organisms it targets.

Its subcellular location is the cell membrane. The protein resides in the endomembrane system. The protein localises to the golgi apparatus. It is found in the trans-Golgi network membrane. Functionally, may participate in trafficking events that are associated with myogenesis, such as myoblast fusion and/or GLUT4 trafficking. In Homo sapiens (Human), this protein is Vesicle-associated membrane protein 5 (VAMP5).